The following is a 258-amino-acid chain: F-box/SPRY domain-containing protein 1 (258 aa).

An F-box domain is found at 6 to 54 (TEYAPDIPDNVLELIFSYLKLQDLRNCSLVCKSWNRFLNDENNEVWRAQ). The B30.2/SPRY domain maps to 64 to 256 (FKTDLLSVVP…ISMVYLGPPL (193 aa)).

It belongs to the FBXO45/Fsn family. In terms of assembly, component of an E3 ubiquitin ligase complex composed of hiw and Fsn.

It localises to the synapse. It participates in protein modification; protein ubiquitination. Its function is as follows. Required in the presynaptic motoneuron to down-regulate the levels of wnd and restrain synaptic terminal growth at the neuromuscular junction (NMJ). This is F-box/SPRY domain-containing protein 1 from Aedes aegypti (Yellowfever mosquito).